Here is a 36-residue protein sequence, read N- to C-terminus: MSDIN-like toxin proprotein 10 (36 aa).

Positions 1-10 are excised as a propeptide; the sequence is MSDINATRLP. Positions 11–19 form a cross-link, cyclopeptide (Gly-Pro); that stretch reads GAYPPVPMP. The propeptide occupies 20–36; that stretch reads CVGDADNFTLTRGENLC.

This sequence belongs to the MSDIN fungal toxin family. In terms of processing, processed by the macrocyclase-peptidase enzyme POPB to yield a toxic cyclic nonapeptide. POPB first removes 10 residues from the N-terminus. Conformational trapping of the remaining peptide forces the enzyme to release this intermediate rather than proceed to macrocyclization. The enzyme rebinds the remaining peptide in a different conformation and catalyzes macrocyclization of the N-terminal 9 residues.

In terms of biological role, probable toxin that belongs to the MSDIN-like toxin family responsible for a large number of food poisoning cases and deaths. This Amanita bisporigera (Destroying angel) protein is MSDIN-like toxin proprotein 10.